The primary structure comprises 257 residues: NAD kinase (257 aa).

D46 acts as the Proton acceptor in catalysis. NAD(+)-binding positions include 46–47 (DG), 116–117 (NE), D146, A154, 157–162 (TAYNLS), and N218.

The protein belongs to the NAD kinase family. It depends on a divalent metal cation as a cofactor.

Its subcellular location is the cytoplasm. The enzyme catalyses NAD(+) + ATP = ADP + NADP(+) + H(+). In terms of biological role, involved in the regulation of the intracellular balance of NAD and NADP, and is a key enzyme in the biosynthesis of NADP. Catalyzes specifically the phosphorylation on 2'-hydroxyl of the adenosine moiety of NAD to yield NADP. In Brucella melitensis biotype 1 (strain ATCC 23456 / CCUG 17765 / NCTC 10094 / 16M), this protein is NAD kinase.